We begin with the raw amino-acid sequence, 366 residues long: DNA replication and repair protein RecF (366 aa).

Position 30 to 37 (30 to 37 (GRNAQGKT)) interacts with ATP.

It belongs to the RecF family.

The protein resides in the cytoplasm. Functionally, the RecF protein is involved in DNA metabolism; it is required for DNA replication and normal SOS inducibility. RecF binds preferentially to single-stranded, linear DNA. It also seems to bind ATP. The chain is DNA replication and repair protein RecF from Streptococcus thermophilus (strain CNRZ 1066).